A 129-amino-acid polypeptide reads, in one-letter code: MSSSQTLPKYVSIVSTNRWIISKVSSSLSTSGVIPTIKYRLAYRLYTTLWSLYSMMLHILGFLANIVGVKSFTIFAFSPADIAVYHFFNLIFPCLETSNKYFNCVILCTCVSVYNLLQDRSCSWLKLLL.

A run of 3 helical transmembrane segments spans residues 49–69 (LWSL…IVGV), 72–92 (FTIF…NLIF), and 101–118 (YFNC…NLLQ).

The protein localises to the membrane. This is an uncharacterized protein from Saccharomyces cerevisiae (strain ATCC 204508 / S288c) (Baker's yeast).